We begin with the raw amino-acid sequence, 288 residues long: Undecaprenyl-diphosphatase (288 aa).

Helical transmembrane passes span 25 to 45, 53 to 73, 93 to 113, 121 to 141, 171 to 191, 196 to 216, 231 to 251, and 263 to 283; these read GITE…NEFL, FIDM…MVIY, WKLW…GLLL, LSNF…FIWI, VLSI…GIIV, SVAA…YSGL, GQAA…LFVI, and FTVF…YGAV.

The protein belongs to the UppP family.

Its subcellular location is the cell membrane. It catalyses the reaction di-trans,octa-cis-undecaprenyl diphosphate + H2O = di-trans,octa-cis-undecaprenyl phosphate + phosphate + H(+). Catalyzes the dephosphorylation of undecaprenyl diphosphate (UPP). Confers resistance to bacitracin. The polypeptide is Undecaprenyl-diphosphatase (Streptococcus thermophilus (strain CNRZ 1066)).